Here is an 819-residue protein sequence, read N- to C-terminus: Solute carrier organic anion transporter family member 74D (819 aa).

Residues 1 to 157 (MTKSNGDVEA…GSSAESSSSC (157 aa)) are disordered. Over 1 to 174 (MTKSNGDVEA…RWARRFASTH (174 aa)) the chain is Cytoplasmic. Composition is skewed to polar residues over residues 24–34 (GHGQLNGNGYH), 43–62 (SQAF…NGEV), and 71–81 (LYESTPSNNNE). Low complexity-rich tracts occupy residues 91–111 (LKNG…NGHS) and 144–157 (DLNG…SSSC). A helical transmembrane segment spans residues 175–195 (VFMVVFLLAYILQGMYMTYFV). Over 196–213 (SVITTIEKLFQIKSKTTG) the chain is Extracellular. The helical transmembrane segment at 214–234 (ILLSASEMGQICTAMLLTYFA) threads the bilayer. Residues 235-242 (GRGHRPRW) are Cytoplasmic-facing. The chain crosses the membrane as a helical span at residues 243–263 (IACGMVLFSIAAFSCALPHFI). Over 264–332 (FGEQLMHSSV…LEQASHSKIT (69 aa)) the chain is Extracellular. 3 N-linked (GlcNAc...) asparagine glycosylation sites follow: Asn-284, Asn-293, and Asn-309. Residues 333–353 (VIVLCIFFGSLLSSGIGQTAV) traverse the membrane as a helical segment. Residues 354 to 373 (ATLGIPYIDDNVGSKQSPMY) lie on the Cytoplasmic side of the membrane. The chain crosses the membrane as a helical span at residues 374 to 394 (MAVTIGMRILGPASGFIFGSF). The Extracellular segment spans residues 395–413 (CTRWYVNFSNPGFDATDPR). A glycan (N-linked (GlcNAc...) asparagine) is linked at Asn-401. A helical membrane pass occupies residues 414 to 434 (WIGAWWLGPVAIGSLMLLASI). Residues 435-488 (AMFSFPKQLRGKQKPPGQTATPAAPVEPEEKPKLKDFPKTVRRQLSNDILMFRT) are Cytoplasmic-facing. The segment at 444-466 (RGKQKPPGQTATPAAPVEPEEKP) is disordered. A helical membrane pass occupies residues 489-509 (ASCVFHLLPIAGLYTFLPKYL). Residues 510–522 (ETQFRLATYDANM) are Extracellular-facing. The chain crosses the membrane as a helical span at residues 523–543 (IAAFCGILVMGIGIVISGLFI). Residues 544–553 (LKRKPTARGV) lie on the Cytoplasmic side of the membrane. A helical transmembrane segment spans residues 554–574 (AAWIAFTALVYSAGMIILMFI). Residues 575–667 (GCSMNDFAGY…NGYCDNNCKN (93 aa)) are Extracellular-facing. A Kazal-like domain is found at 593–651 (ALIEPTCSAALNCTCDKENFAPICADGKMYISACHAGCSSSSLRPSDNRTLYSDCACIP). 3 disulfide bridges follow: Cys-599-Cys-630, Cys-607-Cys-626, and Cys-616-Cys-649. An N-linked (GlcNAc...) asparagine glycan is attached at Asn-604. An N-linked (GlcNAc...) asparagine glycan is attached at Asn-640. The helical transmembrane segment at 668–688 (FIYFILIFAICVFMHSTSEVG) threads the bilayer. At 689-707 (SMLLVMRCTHPKDKAMAMG) the chain is on the cytoplasmic side. The helical transmembrane segment at 708–728 (VIQSAIGLFGNVPCPIIYGAV) threads the bilayer. Over 729–756 (VDSACLIWKSVCGKHGACSLYDADTFRQ) the chain is Extracellular. The chain crosses the membrane as a helical span at residues 757–777 (YFLGITAGIMFLAFLMDLVVW). Residues 778-819 (RKAHRIDIAPEDPQEGGPASNGRTLEVSESKQPITPAPDTTV) are Cytoplasmic-facing. Residues 787–819 (PEDPQEGGPASNGRTLEVSESKQPITPAPDTTV) are disordered. The span at 807–819 (SKQPITPAPDTTV) shows a compositional bias: polar residues.

The protein belongs to the organo anion transporter (TC 2.A.60) family.

It localises to the cell membrane. Functionally, transporter that mediates the cellular uptake of ecdysteroids, including ecdysone, from the hemolymph. This is Solute carrier organic anion transporter family member 74D from Drosophila melanogaster (Fruit fly).